The sequence spans 517 residues: MLPKVESEYLGLARSHGEQGHMPGNMQAPQFKMMDYSYDEDLDEMCPVCGDKVSGYHYGLLTCESCKGFFKRTVQNNKRYTCIENQSCQIDKTQRKRCPYCRFQKCLTVGMKLEAVRADRMRGGRNKFGPMYKRDRALKQQKKALIRANGLKLEAMTQVMQTVPADLTITSAIQNIHSASKGLPLSHHHHHHHHHHHHSSSSAGLPPADFDRSPFVTSPVSMAMPPHAGGLQGYQAYGHFQSRTIKSEYPDPYTSSPESLMGYPYVEAYAGGSPPSFPHLVVELLKCEPDEPQVQAKILAYLQQEQASRGKHEKLNTFGLMCKMADQTLFSIVEWARSSIFFRELKVDDQMKLLQNCWSELLILDHVFRQVMHAKEGSILLVTGQQVDYALIASQAGATLNNLLSHAQELVSKLRSLQLDQREFVCLKFLVLFSLDVKNLENFHLVESVQEQVNAALLDYVMCNYPQQTDKFGQLLLRLPEIRAISLQAEEYLYYKHLNGDVPCNNLLIEMLHAKRA.

The nuclear receptor DNA-binding region spans 43–118 (DEMCPVCGDK…VGMKLEAVRA (76 aa)). Residues cysteine 46, cysteine 49, cysteine 63, cysteine 66, cysteine 82, cysteine 88, cysteine 98, and cysteine 101 each coordinate Zn(2+). 2 NR C4-type zinc fingers span residues 46 to 66 (CPVC…CESC) and 82 to 101 (CIEN…CPYC). The tract at residues 112 to 127 (KLEAVRADRMRGGRNK) is C-terminal extension (CTE). The FTZ-F1 box signature appears at 128 to 147 (FGPMYKRDRALKQQKKALIR). The tract at residues 182-211 (GLPLSHHHHHHHHHHHHSSSSAGLPPADFD) is disordered. A compositionally biased stretch (basic residues) spans 186 to 199 (SHHHHHHHHHHHHS). Positions 276–515 (SFPHLVVELL…NLLIEMLHAK (240 aa)) constitute an NR LBD domain. A phospholipid derivative-binding positions include 397–400 (GATL), tyrosine 492, and lysine 496. The interval 504 to 515 (CNNLLIEMLHAK) is AF-2.

This sequence belongs to the nuclear hormone receptor family. NR5 subfamily. As to quaternary structure, monomer; Binds DNA as a monomer.

The protein localises to the nucleus. It localises to the chromosome. Its function is as follows. Orphan nuclear receptor that binds DNA as a monomer to the 5'-TCAAGGCCA-3' sequence and controls expression of target genes: regulates key biological processes, such as cholesterol and bile acid synthesis pathways, as well as cartilage, liver and pancreas morphogenesis. Ligand-binding causes conformational change which causes recruitment of coactivators, promoting target gene activation. The specific ligand is unknown, but specific phospholipids, such as phosphatidylethanolamine, phosphatidylserine, dilauroyl phosphatidylcholine and diundecanoyl phosphatidylcholine can act as ligand in vitro. Acts as a pioneer transcription factor, which unwraps target DNA from histones and elicits local opening of closed chromatin. Involved in the formation of connective tissue in lower jaw. Functionally, lacks transcription factor activity; unable to activate expression of target genes. This is Nuclear receptor subfamily 5 group A member 2 from Danio rerio (Zebrafish).